The sequence spans 126 residues: Late histone H2A.L3 (126 aa).

Residues 1-20 form a disordered region; sequence MSGRGKGAGKARAKAKSRSA. Serine 2 is modified (N-acetylserine). Serine 2 is modified (phosphoserine). Residues 7–19 are compositionally biased toward basic residues; that stretch reads GAGKARAKAKSRS. Glutamine 105 is modified (N5-methylglutamine). Lysine 120 is covalently cross-linked (Glycyl lysine isopeptide (Lys-Gly) (interchain with G-Cter in ubiquitin)).

This sequence belongs to the histone H2A family. As to quaternary structure, the nucleosome is a histone octamer containing two molecules each of H2A, H2B, H3 and H4 assembled in one H3-H4 heterotetramer and two H2A-H2B heterodimers. The octamer wraps approximately 147 bp of DNA. Post-translationally, monoubiquitination of Lys-120 gives a specific tag for epigenetic transcriptional repression. In terms of processing, phosphorylation of Ser-2 directly represses transcription.

It localises to the nucleus. The protein resides in the chromosome. In terms of biological role, core component of nucleosome. Nucleosomes wrap and compact DNA into chromatin, limiting DNA accessibility to the cellular machineries which require DNA as a template. Histones thereby play a central role in transcription regulation, DNA repair, DNA replication and chromosomal stability. DNA accessibility is regulated via a complex set of post-translational modifications of histones, also called histone code, and nucleosome remodeling. This chain is Late histone H2A.L3, found in Strongylocentrotus purpuratus (Purple sea urchin).